A 793-amino-acid polypeptide reads, in one-letter code: E3 UFM1-protein ligase 1 (793 aa).

Position 2 is an N-acetylalanine (alanine 2). Positions 2-200 (ADAWEEIRRL…RGLFSAITRP (199 aa)) are mediates interaction with DDRGK1. Residues 2–212 (ADAWEEIRRL…VNSLVSKYGF (211 aa)) form a required for E3 UFM1-protein ligase activity region. The tract at residues 121 to 250 (DRLSEEVNDK…KAVFVPDIYS (130 aa)) is involved in CDK5RAP3-binding. The tract at residues 200 to 400 (PTAVNSLVSK…NPVHLITEED (201 aa)) is mediates interaction with TRIP4. Residues 410-473 (VNTNKKDKKD…SSHAGKKKPD (64 aa)) form a disordered region. Arginine 433 bears the Omega-N-methylarginine mark. Phosphoserine is present on residues serine 458 and serine 462. The mediates interaction with CDK5RAP3 stretch occupies residues 490 to 683 (IPDAPEEFIS…QLKVTEDPAL (194 aa)). Threonine 535 carries the phosphothreonine modification. The tract at residues 742 to 769 (NKKSGQGEDPSSDDLDKEQHDVTNTTRK) is disordered. A phosphoserine mark is found at serine 752 and serine 753. The span at 758-769 (KEQHDVTNTTRK) shows a compositional bias: basic and acidic residues.

It belongs to the UFL1 family. In terms of assembly, catalytic component of the UFM1 ribosome E3 ligase (UREL) complex, composed of UFL1, DDRGK1 and CDK5RAP3. Interacts with E2-like enzyme UFC1. Interacts with RELA. Interacts with NBN; promoting recruitment to double-strand breaks following DNA damage. Interacts (when phosphorylated) with YWHAG/14-3-3-gamma; sequestering UFL1 and preventing its association with PDCD1/PD-1 substrate. Ubiquitinated, leading to its degradation by the proteasome. Interaction with CDK5RAP3 protects both proteins against ubiquitination and degradation via the proteasome. Post-translationally, phosphorylated at Ser-462 by ATM, enhancing protein ligase activity and promoting ATM activation in a positive feedback loop. Phosphorylation at Thr-535 by AMPK promotes its interaction with YWHAG/14-3-3-gamma, thereby preventing UFL1 association with PDCD1/PD-1 substrate. As to expression, ubiquitously expressed with expression detected in brain, skeletal muscle, lung, heart, gall bladder, liver, small intestine, pancreas, spleen and kidney (at protein level). At 8 weeks after birth, high expression in the Purkinje cell layer of the cerebellum.

The protein resides in the endoplasmic reticulum membrane. The protein localises to the cytoplasm. It localises to the cytosol. Its subcellular location is the nucleus. It is found in the chromosome. Functionally, E3 protein ligase that mediates ufmylation, the covalent attachment of the ubiquitin-like modifier UFM1 to lysine residues on target proteins, and which plays a key role in various processes, such as ribosome recycling, response to DNA damage, interferon response or reticulophagy (also called ER-phagy). Catalyzes ufmylation of many protein, such as CD274/PD-L1, CDK5RAP3, CYB5R3, DDRGK1, EIF6, histone H4, MRE11, P4HB, PDCD1/PD-1, TRIP4, RPN1, RPS20/uS10, RPL10/uL16, RPL26/uL24, SYVN1/HRD1 and TP53/p53. As part of the UREL complex, plays a key role in ribosome recycling by catalyzing mono-ufmylation of RPL26/uL24 subunit of the 60S ribosome. Ufmylation of RPL26/uL24 occurs on free 60S ribosomes following ribosome dissociation: it weakens the junction between post-termination 60S subunits and SEC61 translocons, promoting release and recycling of the large ribosomal subunit from the endoplasmic reticulum membrane. Ufmylation of RPL26/uL24 and subsequent 60S ribosome recycling either take place after normal termination of translation or after ribosome stalling during cotranslational translocation at the endoplasmic reticulum. Involved in reticulophagy in response to endoplasmic reticulum stress by mediating ufmylation of proteins such as CYB5R3 and RPN1, thereby promoting lysosomal degradation of ufmylated proteins. Ufmylation in response to endoplasmic reticulum stress is essential for processes such as hematopoiesis, blood vessel morphogenesis or inflammatory response. Mediates ufmylation of DDRGK1 and CDK5RAP3; the role of these modifications is however unclear: as both DDRGK1 and CDK5RAP3 act as substrate adapters for ufmylation, it is uncertain whether ufmylation of these proteins is, a collateral effect or is required for ufmylation. Acts as a negative regulator of T-cell activation by mediating ufmylation and stabilization of PDCD1/PD-1. Also involved in the response to DNA damage: recruited to double-strand break sites following DNA damage and mediates monoufmylation of histone H4 and ufmylation of MRE11. Mediates ufmylation of TP53/p53, promoting its stability. Catalyzes ufmylation of TRIP4, thereby playing a role in nuclear receptor-mediated transcription. Required for hematopoietic stem cell function and hematopoiesis. The chain is E3 UFM1-protein ligase 1 from Rattus norvegicus (Rat).